The sequence spans 360 residues: Phospho-N-acetylmuramoyl-pentapeptide-transferase (360 aa).

A run of 10 helical transmembrane segments spans residues 26–46, 72–92, 94–114, 132–152, 168–188, 199–219, 236–256, 263–283, 288–308, and 338–358; these read AIVS…RMIA, PTMG…LWAY, SNPY…IGFV, WKYF…YLAG, VMPQ…VGTG, GLAI…AWAT, AGEL…FLWF, VFMG…IAVL, FLLV…ILQV, and VIVR…ATLK.

The protein belongs to the glycosyltransferase 4 family. MraY subfamily. It depends on Mg(2+) as a cofactor.

It is found in the cell inner membrane. The catalysed reaction is UDP-N-acetyl-alpha-D-muramoyl-L-alanyl-gamma-D-glutamyl-meso-2,6-diaminopimeloyl-D-alanyl-D-alanine + di-trans,octa-cis-undecaprenyl phosphate = di-trans,octa-cis-undecaprenyl diphospho-N-acetyl-alpha-D-muramoyl-L-alanyl-D-glutamyl-meso-2,6-diaminopimeloyl-D-alanyl-D-alanine + UMP. Its pathway is cell wall biogenesis; peptidoglycan biosynthesis. Functionally, catalyzes the initial step of the lipid cycle reactions in the biosynthesis of the cell wall peptidoglycan: transfers peptidoglycan precursor phospho-MurNAc-pentapeptide from UDP-MurNAc-pentapeptide onto the lipid carrier undecaprenyl phosphate, yielding undecaprenyl-pyrophosphoryl-MurNAc-pentapeptide, known as lipid I. In Klebsiella pneumoniae (strain 342), this protein is Phospho-N-acetylmuramoyl-pentapeptide-transferase.